Consider the following 220-residue polypeptide: Deoxyribose-phosphate aldolase (220 aa).

Asp-89 functions as the Proton donor/acceptor in the catalytic mechanism. Residue Lys-151 is the Schiff-base intermediate with acetaldehyde of the active site. The Proton donor/acceptor role is filled by Lys-180.

This sequence belongs to the DeoC/FbaB aldolase family. DeoC type 1 subfamily.

It is found in the cytoplasm. It catalyses the reaction 2-deoxy-D-ribose 5-phosphate = D-glyceraldehyde 3-phosphate + acetaldehyde. Its pathway is carbohydrate degradation; 2-deoxy-D-ribose 1-phosphate degradation; D-glyceraldehyde 3-phosphate and acetaldehyde from 2-deoxy-alpha-D-ribose 1-phosphate: step 2/2. In terms of biological role, catalyzes a reversible aldol reaction between acetaldehyde and D-glyceraldehyde 3-phosphate to generate 2-deoxy-D-ribose 5-phosphate. The protein is Deoxyribose-phosphate aldolase of Streptococcus pneumoniae (strain 70585).